Consider the following 85-residue polypeptide: UPF0335 protein Atu3758 (85 aa).

It belongs to the UPF0335 family.

This Agrobacterium fabrum (strain C58 / ATCC 33970) (Agrobacterium tumefaciens (strain C58)) protein is UPF0335 protein Atu3758.